Here is a 124-residue protein sequence, read N- to C-terminus: Glycine cleavage system H protein (124 aa).

Positions 24-106 (TYTMGITDHA…YDDGWLVKFK (83 aa)) constitute a Lipoyl-binding domain. At lysine 65 the chain carries N6-lipoyllysine.

This sequence belongs to the GcvH family. As to quaternary structure, the glycine cleavage system is composed of four proteins: P, T, L and H. (R)-lipoate is required as a cofactor.

Its function is as follows. The glycine cleavage system catalyzes the degradation of glycine. The H protein shuttles the methylamine group of glycine from the P protein to the T protein. This Ruthia magnifica subsp. Calyptogena magnifica protein is Glycine cleavage system H protein.